Reading from the N-terminus, the 400-residue chain is U-box domain-containing protein 37 (400 aa).

The stretch at 229–298 (KEWESAYLEE…RKAKEERDLL (70 aa)) forms a coiled coil. A U-box domain is found at 324 to 398 (EAPQYFICPI…QEWLHASSSF (75 aa)).

It carries out the reaction S-ubiquitinyl-[E2 ubiquitin-conjugating enzyme]-L-cysteine + [acceptor protein]-L-lysine = [E2 ubiquitin-conjugating enzyme]-L-cysteine + N(6)-ubiquitinyl-[acceptor protein]-L-lysine.. The protein operates within protein modification; protein ubiquitination. Its function is as follows. Functions as an E3 ubiquitin ligase. The sequence is that of U-box domain-containing protein 37 (PUB37) from Arabidopsis thaliana (Mouse-ear cress).